The following is a 545-amino-acid chain: Thermosome subunit (545 aa).

Belongs to the TCP-1 chaperonin family. As to quaternary structure, forms an oligomeric complex of eight-membered rings.

Functionally, molecular chaperone; binds unfolded polypeptides in vitro, and has a weak ATPase activity. This chain is Thermosome subunit (ths), found in Desulfurococcus sp. (strain SY).